A 149-amino-acid chain; its full sequence is Large ribosomal subunit protein bL9 (149 aa).

This sequence belongs to the bacterial ribosomal protein bL9 family.

Binds to the 23S rRNA. The polypeptide is Large ribosomal subunit protein bL9 (Anaeromyxobacter dehalogenans (strain 2CP-1 / ATCC BAA-258)).